Reading from the N-terminus, the 324-residue chain is Putative HTH-type transcriptional regulatory protein UNCMA_15260 (324 aa).

Residues 132–189 form the HTH cro/C1-type domain; the sequence is LRSLREAKNISLGELAMALGVSRRTISKYESGMNATIEAALKLEEILDAPIACPVNMI. The H-T-H motif DNA-binding region spans 143 to 162; it reads LGELAMALGVSRRTISKYES.

This chain is Putative HTH-type transcriptional regulatory protein UNCMA_15260, found in Methanocella arvoryzae (strain DSM 22066 / NBRC 105507 / MRE50).